The chain runs to 336 residues: L-rhamnono-gamma-lactonase (336 aa).

It belongs to the metallo-dependent hydrolases superfamily. A divalent metal cation serves as cofactor.

It catalyses the reaction L-rhamnono-1,4-lactone + H2O = L-rhamnonate + H(+). With respect to regulation, inhibited by Zn(2+), Fe(2+) and Cu(2+), but not by EDTA. In terms of biological role, hydrolase with high substrate specificity for L-rhamnono-1,4-lactone. Catalyzes the second step in an alternative pathway for rhamnose utilization that does not involve phosphorylated intermediates. In Scheffersomyces stipitis (strain ATCC 58785 / CBS 6054 / NBRC 10063 / NRRL Y-11545) (Yeast), this protein is L-rhamnono-gamma-lactonase (LRA2).